A 595-amino-acid chain; its full sequence is O-phosphoseryl-tRNA(Sec) selenium transferase (595 aa).

Arg-75 contributes to the pyridoxal 5'-phosphate binding site. The segment at 96 to 106 (GRSGDLFSEQP) is phosphate loop (P-loop). Residues Arg-97, Ser-98, and Gln-105 each contribute to the substrate site. The span at 174-187 (RTVTKDSTSATSAA) shows a compositional bias: polar residues. Disordered regions lie at residues 174–208 (RTVT…TSLP) and 257–278 (STNR…TPTS). A compositionally biased stretch (basic and acidic residues) spans 196-205 (EADRDRHDRT). Residue Arg-358 participates in tRNA binding. Lys-371 is modified (N6-(pyridoxal phosphate)lysine). Arg-400 is a binding site for substrate.

It belongs to the SepSecS family. As to quaternary structure, homotetramer composed of two homodimers. The cofactor is pyridoxal 5'-phosphate.

The protein resides in the cytoplasm. It carries out the reaction O-phospho-L-seryl-tRNA(Sec) + selenophosphate + H2O = L-selenocysteinyl-tRNA(Sec) + 2 phosphate. Its pathway is aminoacyl-tRNA biosynthesis; selenocysteinyl-tRNA(Sec) biosynthesis; selenocysteinyl-tRNA(Sec) from L-seryl-tRNA(Sec) (archaeal/eukaryal route): step 2/2. Functionally, converts O-phosphoseryl-tRNA(Sec) to selenocysteinyl-tRNA(Sec) required for selenoprotein biosynthesis. This chain is O-phosphoseryl-tRNA(Sec) selenium transferase, found in Leishmania donovani.